We begin with the raw amino-acid sequence, 173 residues long: Small ribosomal subunit protein uS9 (173 aa).

Positions 20–53 (SYTTESEVPVEGEYTSESVASRFGEPQPAAGLGR) are disordered.

Belongs to the universal ribosomal protein uS9 family.

The chain is Small ribosomal subunit protein uS9 from Streptomyces avermitilis (strain ATCC 31267 / DSM 46492 / JCM 5070 / NBRC 14893 / NCIMB 12804 / NRRL 8165 / MA-4680).